A 240-amino-acid chain; its full sequence is Vacuolar-sorting protein SNF7 (240 aa).

Thr-72 carries the phosphothreonine modification. Ser-119 and Ser-193 each carry phosphoserine. The segment at Ser-193–Leu-240 is disordered. Over residues Asn-195–Asn-212 the composition is skewed to polar residues. Acidic residues predominate over residues Gly-217 to Glu-228. Residue Lys-229 forms a Glycyl lysine isopeptide (Lys-Gly) (interchain with G-Cter in ubiquitin) linkage. Positions Lys-229 to Leu-240 are enriched in basic and acidic residues.

The protein belongs to the SNF7 family. Core component of the ESCRT-III complex (endosomal sorting required for transport complex III). ESCRT-III appears to be sequentially assembled as a flat lattice on the endosome membrane and forms a transient 450 kDa complex that contains DID4, oligomerized SNF7, VPS20 and VPS24. SNF7 polymerizes into spirals at the surface of lipid bilayers. SNF7 polymerization is nucleated by association of SNF7 with VPS20; the process is terminated through association of VPS24, possibly by capping the SNF7 filament. Interacts with VTA1; the interaction requires DID2. Interacts with BRO1. Interacts with DOA4. Interacts with HEH1 and HEH2. Interacts with RIM20 and YGR122W.

It is found in the cytoplasm. The protein resides in the endosome membrane. Its subcellular location is the nucleus envelope. In terms of biological role, acts a component of the ESCRT-III complex required for the sorting and concentration of proteins resulting in the entry of these proteins into the invaginating vesicles of the multivesicular body (MVB). The sequential action of ESCRT-0, -I, and -II together with the ordered assembly of ESCRT-III links membrane invagination to cargo sorting. Membrane scission in the neck of the growing vesicle releases mature, cargo-laden ILVs into the lumen. ESCRT-III is critical for late steps in MVB sorting, such as membrane invagination and final cargo sorting and recruitment of late-acting components of the sorting machinery. SNF7 is the most abundant ESCRT-III subunit which forms membrane-sculpting filaments with 30 Angstrom periodicity and a exposed cationic membrane-binding surface. Its activation requires a prominent conformational rearrangement to expose protein-membrane and protein-protein interfaces. SNF7 filaments then form spirals that could function as spiral springs. The elastic expansion of compressed SNF7 spirals generates an area difference between the two sides of the membrane and thus curvature which could be the origin of membrane deformation leading eventually to fission. SNF7 recruits BRO1, which in turn recruits DOA4, which deubiquitinates cargos before their enclosure within MVB vesicles. ESCRT-III is also recruited to the nuclear envelope (NE) by integral INM proteins to surveil and clear defective nuclear pore complex (NPC) assembly intermediates to ensure the fidelity of NPC assembly. The sequence is that of Vacuolar-sorting protein SNF7 from Saccharomyces cerevisiae (strain ATCC 204508 / S288c) (Baker's yeast).